Here is a 268-residue protein sequence, read N- to C-terminus: Protein CDV3 homolog (268 aa).

Residues 40–50 show a composition bias toward basic and acidic residues; the sequence is KREVVKPKKPE. 2 disordered regions span residues 40–145 and 184–268; these read KREV…ERVG and QQAG…DEAS. Positions 51 to 61 are enriched in low complexity; that stretch reads AAAGGVAVVGE. Residues 76–85 show a composition bias toward acidic residues; that stretch reads VEEEWKEFEE. Residues 98-107 show a composition bias toward polar residues; the sequence is QLSTITAQES. The segment covering 123–132 has biased composition (acidic residues); it reads NYDEDDEDSN. Over residues 221–239 the composition is skewed to basic and acidic residues; the sequence is RPEEQRKKKNEPAFEEVRH.

This sequence belongs to the CDV3 family.

This is Protein CDV3 homolog from Drosophila yakuba (Fruit fly).